A 1139-amino-acid chain; its full sequence is Ras GTPase-activating protein nGAP (1139 aa).

Residues 1–87 (MQTPEVPAER…SRGLPKLKES (87 aa)) form a disordered region. The residue at position 16 (Ser16) is a Phosphoserine. Residues 17-36 (ISGTSTSEKPNSMDTANTSP) are compositionally biased toward polar residues. The PH domain maps to 41 to 158 (GFFSKRLKGS…WMENLRRTVQ (118 aa)). Over residues 45-56 (KRLKGSIKRTKS) the composition is skewed to basic residues. A compositionally biased stretch (basic and acidic residues) spans 73–87 (STDDRSRGLPKLKES). A Phosphoserine modification is found at Ser89. Residues 149 to 267 (WMENLRRTVQ…TGRQFVEKWY (119 aa)) form the C2 domain. Residues 343–551 (GRAKDFLTDL…GGMKRFLLEI (209 aa)) enclose the Ras-GAP domain. A Phosphothreonine modification is found at Thr620. At Ser663 the chain carries Phosphoserine. 5 disordered regions span residues 684–704 (ASSQ…LPNG), 751–782 (ETQS…LSFQ), 803–869 (SLEN…GQAQ), 910–953 (EPVQ…SATM), and 1116–1139 (NGIS…NSSC). 2 stretches are compositionally biased toward polar residues: residues 751–760 (ETQSTPQSAP) and 803–818 (SLEN…QSNS). Positions 833-855 (DFTKRSTQSEDFSRRHTVPDRHI) are enriched in basic and acidic residues. Ser864 bears the Phosphoserine mark. Low complexity predominate over residues 916-928 (SRSRQQSSSSRES).

In terms of assembly, interacts with PEAK1.

Functionally, inhibitory regulator of the Ras-cyclic AMP pathway. This is Ras GTPase-activating protein nGAP (RASAL2) from Homo sapiens (Human).